Consider the following 511-residue polypeptide: DEP domain-containing protein 7 (511 aa).

The region spanning 46 to 136 (LQTQVEVKKR…SSCSLYRFTT (91 aa)) is the DEP domain.

The protein belongs to the DEPDC7 family. Expressed in liver.

This is DEP domain-containing protein 7 (DEPDC7) from Homo sapiens (Human).